The primary structure comprises 214 residues: Phosphoheptose isomerase (214 aa).

One can recognise an SIS domain in the interval I51 to Y209. N66–G68 contributes to the substrate binding site. 2 residues coordinate Zn(2+): H75 and E79. Residues E79, N110–D111, S136–S138, S141, and Q189 each bind substrate. Zn(2+)-binding residues include Q189 and H197.

This sequence belongs to the SIS family. GmhA subfamily. Zn(2+) serves as cofactor.

The protein resides in the cytoplasm. It carries out the reaction 2 D-sedoheptulose 7-phosphate = D-glycero-alpha-D-manno-heptose 7-phosphate + D-glycero-beta-D-manno-heptose 7-phosphate. It participates in carbohydrate biosynthesis; D-glycero-D-manno-heptose 7-phosphate biosynthesis; D-glycero-alpha-D-manno-heptose 7-phosphate and D-glycero-beta-D-manno-heptose 7-phosphate from sedoheptulose 7-phosphate: step 1/1. In terms of biological role, catalyzes the isomerization of sedoheptulose 7-phosphate in D-glycero-D-manno-heptose 7-phosphate. The sequence is that of Phosphoheptose isomerase from Chlorobium limicola (strain DSM 245 / NBRC 103803 / 6330).